The primary structure comprises 510 residues: Amidophosphoribosyltransferase (510 aa).

Catalysis depends on cysteine 2, which acts as the Nucleophile. Residues 2–239 form the Glutamine amidotransferase type-2 domain; that stretch reads CGILGIALAD…PGEAVIIPKD (238 aa). Mg(2+) is bound by residues aspartate 373 and aspartate 374.

This sequence in the C-terminal section; belongs to the purine/pyrimidine phosphoribosyltransferase family. It depends on Mg(2+) as a cofactor.

It carries out the reaction 5-phospho-beta-D-ribosylamine + L-glutamate + diphosphate = 5-phospho-alpha-D-ribose 1-diphosphate + L-glutamine + H2O. The protein operates within purine metabolism; IMP biosynthesis via de novo pathway; N(1)-(5-phospho-D-ribosyl)glycinamide from 5-phospho-alpha-D-ribose 1-diphosphate: step 1/2. This is Amidophosphoribosyltransferase (ADE4) from Lachancea kluyveri (Yeast).